The primary structure comprises 459 residues: Ribulose bisphosphate carboxylase/oxygenase activase, chloroplastic (459 aa).

164–171 is a binding site for ATP; sequence GGKGQGKS.

Belongs to the RuBisCO activase family.

Its subcellular location is the plastid. The protein resides in the chloroplast stroma. Functionally, activation of RuBisCO (ribulose-1,5-bisphosphate carboxylase/oxygenase; EC 4.1.1.39) involves the ATP-dependent carboxylation of the epsilon-amino group of lysine leading to a carbamate structure. The protein is Ribulose bisphosphate carboxylase/oxygenase activase, chloroplastic of Solanum pennellii (Tomato).